Reading from the N-terminus, the 306-residue chain is Acyl transferase (306 aa).

Residues serine 117, aspartate 214, and histidine 244 each act as charge relay system in the active site.

It belongs to the LuxD family.

The protein operates within lipid metabolism; fatty acid reduction for biolumincescence. Functionally, acyl transferase is part of the fatty acid reductase system required for aldehyde biosynthesis; it produces fatty acids for the luminescent reaction. This Photobacterium phosphoreum protein is Acyl transferase.